The chain runs to 374 residues: MRSGRFIGVMSGTSLDGIDVVLATITENMVAQQASLTWPIPHAIKEEILAICQGQSLTLSQLGRLDTRLGRLFADAVLALMRQESLKPTDVIAIGCHGQTVWHEPQGEAPHTLQIGDNNQIAAHTGITVVGDFRRRDMALGGQGAPLVPAFHHALLAHPVERRMVLNIGGIANVSLLAPGQPVRGYDTGPGNMLLDAWIWRQKGKPYDKDAQWASEGKVLLPLLQDMLSDPWFALPAPKSTGREYFNYGWLEQHMARYPGLRGEDVQATLAELTAVTISEQVLLSGGCERLLVCGGGARNPLLMARLAALLPGTEVSTTDEAGISGDDMEALAFAWLAWRTLAGLPGNLPSVTGASEASVLGAIFPANPPQNRS.

12–19 (GTSLDGID) serves as a coordination point for ATP.

Belongs to the anhydro-N-acetylmuramic acid kinase family.

It catalyses the reaction 1,6-anhydro-N-acetyl-beta-muramate + ATP + H2O = N-acetyl-D-muramate 6-phosphate + ADP + H(+). Its pathway is amino-sugar metabolism; 1,6-anhydro-N-acetylmuramate degradation. It participates in cell wall biogenesis; peptidoglycan recycling. Catalyzes the specific phosphorylation of 1,6-anhydro-N-acetylmuramic acid (anhMurNAc) with the simultaneous cleavage of the 1,6-anhydro ring, generating MurNAc-6-P. Is required for the utilization of anhMurNAc either imported from the medium or derived from its own cell wall murein, and thus plays a role in cell wall recycling. The chain is Anhydro-N-acetylmuramic acid kinase from Klebsiella pneumoniae subsp. pneumoniae (strain ATCC 700721 / MGH 78578).